Consider the following 466-residue polypeptide: Uronate isomerase (466 aa).

The protein belongs to the metallo-dependent hydrolases superfamily. Uronate isomerase family.

The enzyme catalyses D-glucuronate = D-fructuronate. The catalysed reaction is aldehydo-D-galacturonate = keto-D-tagaturonate. It functions in the pathway carbohydrate metabolism; pentose and glucuronate interconversion. The sequence is that of Uronate isomerase (uxaC) from Brucella melitensis biotype 1 (strain ATCC 23456 / CCUG 17765 / NCTC 10094 / 16M).